The sequence spans 342 residues: S-adenosylmethionine:tRNA ribosyltransferase-isomerase (342 aa).

Belongs to the QueA family. Monomer.

It localises to the cytoplasm. The catalysed reaction is 7-aminomethyl-7-carbaguanosine(34) in tRNA + S-adenosyl-L-methionine = epoxyqueuosine(34) in tRNA + adenine + L-methionine + 2 H(+). The protein operates within tRNA modification; tRNA-queuosine biosynthesis. Its function is as follows. Transfers and isomerizes the ribose moiety from AdoMet to the 7-aminomethyl group of 7-deazaguanine (preQ1-tRNA) to give epoxyqueuosine (oQ-tRNA). The polypeptide is S-adenosylmethionine:tRNA ribosyltransferase-isomerase (Shouchella clausii (strain KSM-K16) (Alkalihalobacillus clausii)).